A 583-amino-acid chain; its full sequence is RuBisCO large subunit-binding protein subunit alpha, chloroplastic (583 aa).

Over residues 1–14 the composition is skewed to polar residues; it reads MATANALSSPSVLC. The disordered stretch occupies residues 1–35; that stretch reads MATANALSSPSVLCSSRQGKLSGGSQQKGQRVSYR. The transit peptide at 1–45 directs the protein to the chloroplast; it reads MATANALSSPSVLCSSRQGKLSGGSQQKGQRVSYRKANRRFSLRA. Positions 15 to 31 are enriched in low complexity; the sequence is SSRQGKLSGGSQQKGQR. Serine 89 carries the phosphoserine modification.

Belongs to the chaperonin (HSP60) family. In terms of assembly, oligomer of probably six alpha and six beta subunits.

The protein resides in the plastid. Its subcellular location is the chloroplast. This protein binds RuBisCO small and large subunits and is implicated in the assembly of the enzyme oligomer. The protein is RuBisCO large subunit-binding protein subunit alpha, chloroplastic of Brassica napus (Rape).